We begin with the raw amino-acid sequence, 269 residues long: uncharacterized protein (269 aa).

Residues 3-66 (VDQAAIDEIL…QNLQNLAEGA (64 aa)) are a coiled coil. Residues 83–142 (AQIPEPPKPEPEVEQPETETGPEPEPEAEPELKEVKEDEPPEEDVVRELDESKSAEPIPE) form a disordered region. Over residues 94-111 (EVEQPETETGPEPEPEAE) the composition is skewed to acidic residues. A compositionally biased stretch (basic and acidic residues) spans 112-136 (PELKEVKEDEPPEEDVVRELDESKS).

This is an uncharacterized protein from Archaeoglobus fulgidus (strain ATCC 49558 / DSM 4304 / JCM 9628 / NBRC 100126 / VC-16).